Consider the following 302-residue polypeptide: tRNA dimethylallyltransferase 2 (302 aa).

An ATP-binding site is contributed by 6–13; it reads GPTACGKT. 8 to 13 provides a ligand contact to substrate; it reads TACGKT. Interaction with substrate tRNA regions lie at residues 31–34 and 154–158; these read DSRQ and QRAIR.

This sequence belongs to the IPP transferase family. In terms of assembly, monomer. Mg(2+) is required as a cofactor.

The catalysed reaction is adenosine(37) in tRNA + dimethylallyl diphosphate = N(6)-dimethylallyladenosine(37) in tRNA + diphosphate. Functionally, catalyzes the transfer of a dimethylallyl group onto the adenine at position 37 in tRNAs that read codons beginning with uridine, leading to the formation of N6-(dimethylallyl)adenosine (i(6)A). The chain is tRNA dimethylallyltransferase 2 from Porphyromonas gingivalis (strain ATCC BAA-308 / W83).